We begin with the raw amino-acid sequence, 477 residues long: Protoporphyrinogen oxidase (477 aa).

Residues glycine 9 to glycine 14, tryptophan 42, glycine 57 to glycine 60, valine 257, alanine 449, and valine 454 to valine 456 contribute to the FAD site.

The protein belongs to the protoporphyrinogen/coproporphyrinogen oxidase family. Protoporphyrinogen oxidase subfamily. In terms of assembly, monomer. Homodimer. Requires FAD as cofactor. As to expression, detected in liver (at protein level).

The protein resides in the mitochondrion inner membrane. It carries out the reaction protoporphyrinogen IX + 3 O2 = protoporphyrin IX + 3 H2O2. The protein operates within porphyrin-containing compound metabolism; protoporphyrin-IX biosynthesis; protoporphyrin-IX from protoporphyrinogen-IX: step 1/1. Functionally, catalyzes the 6-electron oxidation of protoporphyrinogen-IX to form protoporphyrin-IX. The chain is Protoporphyrinogen oxidase (PPOX) from Bos taurus (Bovine).